The chain runs to 393 residues: S-adenosylmethionine synthase 3 (393 aa).

Residue Glu-43 participates in K(+) binding. L-methionine is bound by residues Glu-56 and Gln-99. ATP contacts are provided by residues 167-169, 235-238, Asp-246, 252-253, Ala-269, Lys-273, and Lys-277; these read DGK, SGRF, and RK. Asp-246 serves as a coordination point for L-methionine. Position 277 (Lys-277) interacts with L-methionine.

Belongs to the AdoMet synthase family. Homotetramer. Requires Mn(2+) as cofactor. Mg(2+) is required as a cofactor. The cofactor is Co(2+). It depends on K(+) as a cofactor.

Its subcellular location is the cytoplasm. It carries out the reaction L-methionine + ATP + H2O = S-adenosyl-L-methionine + phosphate + diphosphate. Its pathway is amino-acid biosynthesis; S-adenosyl-L-methionine biosynthesis; S-adenosyl-L-methionine from L-methionine: step 1/1. Functionally, catalyzes the formation of S-adenosylmethionine from methionine and ATP. The reaction comprises two steps that are both catalyzed by the same enzyme: formation of S-adenosylmethionine (AdoMet) and triphosphate, and subsequent hydrolysis of the triphosphate. This Actinidia chinensis var. chinensis (Chinese soft-hair kiwi) protein is S-adenosylmethionine synthase 3 (SAM3).